Reading from the N-terminus, the 816-residue chain is Chitin synthase 1 (816 aa).

The tract at residues 1–21 is disordered; that stretch reads MLSQGEILRNPSRTRLQRPPK. Residues 1-32 lie on the Cytoplasmic side of the membrane; sequence MLSQGEILRNPSRTRLQRPPKSRSERKGWWYR. A helical transmembrane segment spans residues 33 to 53; sequence VTIFLTCLIPNFMLRCFGMTT. Residues 54 to 63 lie on the Extracellular side of the membrane; it reads PEVQHAWREK. Residues 64–84 traverse the membrane as a helical segment; it reads VALCICIFFCWIILGFTTYGM. Residues 85–240 lie on the Cytoplasmic side of the membrane; it reads NTIICKGSNQ…TPGCLLADTM (156 aa). A helical membrane pass occupies residues 241-261; sequence FWITTISIFGLIITKFLLGFF. Topologically, residues 262-697 are extracellular; sequence YSWYAKRRPK…QLVVVMELFG (436 aa). 2 N-linked (GlcNAc...) asparagine glycosylation sites follow: Asn-319 and Asn-664. The helical transmembrane segment at 698 to 718 threads the bilayer; it reads TLVLPAAIIFTFVMIAVSILI. Over 719–720 the chain is Cytoplasmic; it reads EP. The chain crosses the membrane as a helical span at residues 721–741; the sequence is AWVPLIMLVGIFGLPAVLILI. The Extracellular segment spans residues 742–745; it reads TTME. The helical transmembrane segment at 746–766 threads the bilayer; that stretch reads IQYVFWCLVYILSIPIWNFVL. At 767–816 the chain is on the cytoplasmic side; it reads PTYAFWHFDNFSWGDTRKVDGEGKEDEEGEFDHTKIRIRELEEFLSEANK.

This sequence belongs to the chitin synthase family. Class IV subfamily.

It is found in the cell membrane. The enzyme catalyses [(1-&gt;4)-N-acetyl-beta-D-glucosaminyl](n) + UDP-N-acetyl-alpha-D-glucosamine = [(1-&gt;4)-N-acetyl-beta-D-glucosaminyl](n+1) + UDP + H(+). Functionally, polymerizes chitin, a structural polymer of the cell wall and septum, by transferring the sugar moiety of UDP-GlcNAc to the non-reducing end of the growing chitin polymer. The protein is Chitin synthase 1 (CHS1) of Encephalitozoon cuniculi (strain GB-M1) (Microsporidian parasite).